Consider the following 756-residue polypeptide: Protease KEX1 (756 aa).

The signal sequence occupies residues 1-24 (MILSSQLMLALIAVSGYGKAMQVP). Asparagine 121, asparagine 144, and asparagine 152 each carry an N-linked (GlcNAc...) asparagine glycan. In terms of domain architecture, Peptidase S8 spans 130-440 (QWHLINPNYP…FGKLDAYNIV (311 aa)). Catalysis depends on charge relay system residues aspartate 164 and histidine 202. Disulfide bonds link cysteine 218–cysteine 365 and cysteine 310–cysteine 340. The active-site Charge relay system is the serine 373. Asparagine 392 and asparagine 538 each carry an N-linked (GlcNAc...) asparagine glycan. Residues 449-583 (VNPQGWLYLP…RLKMFGETID (135 aa)) form the P/Homo B domain. The segment at 599–632 (AEVKSTESKTTTPTAQTSSFTTTSGEETSGANKL) is disordered. Residues 606 to 628 (SKTTTPTAQTSSFTTTSGEETSG) are compositionally biased toward low complexity. Residues 641 to 661 (LYLAIFVIGAIVIIIYYLFFL) traverse the membrane as a helical segment. The segment at 715–756 (EEELSPRESSSNNPFGNESLESFDNSPDHTSNLLGQNSIPNK) is disordered. A compositionally biased stretch (polar residues) spans 721-756 (RESSSNNPFGNESLESFDNSPDHTSNLLGQNSIPNK).

This sequence belongs to the peptidase S8 family. Furin subfamily. Ca(2+) is required as a cofactor.

It is found in the membrane. Its function is as follows. Probably involved in the processing of the precursor of m1-toxin and alpha-factor. This chain is Protease KEX1 (KEX1), found in Kluyveromyces lactis (strain ATCC 8585 / CBS 2359 / DSM 70799 / NBRC 1267 / NRRL Y-1140 / WM37) (Yeast).